The primary structure comprises 253 residues: DNA repair protein RecO (253 aa).

It belongs to the RecO family.

In terms of biological role, involved in DNA repair and RecF pathway recombination. The polypeptide is DNA repair protein RecO (Dehalococcoides mccartyi (strain CBDB1)).